The following is a 72-amino-acid chain: Translation initiation factor IF-1 (72 aa).

One can recognise an S1-like domain in the interval 1 to 72 (MSKEDVIELE…TRGRIVWRSK (72 aa)).

It belongs to the IF-1 family. Component of the 30S ribosomal translation pre-initiation complex which assembles on the 30S ribosome in the order IF-2 and IF-3, IF-1 and N-formylmethionyl-tRNA(fMet); mRNA recruitment can occur at any time during PIC assembly.

The protein resides in the cytoplasm. Its function is as follows. One of the essential components for the initiation of protein synthesis. Stabilizes the binding of IF-2 and IF-3 on the 30S subunit to which N-formylmethionyl-tRNA(fMet) subsequently binds. Helps modulate mRNA selection, yielding the 30S pre-initiation complex (PIC). Upon addition of the 50S ribosomal subunit IF-1, IF-2 and IF-3 are released leaving the mature 70S translation initiation complex. The polypeptide is Translation initiation factor IF-1 (Caldicellulosiruptor saccharolyticus (strain ATCC 43494 / DSM 8903 / Tp8T 6331)).